Consider the following 88-residue polypeptide: Small ribosomal subunit protein uS15 (88 aa).

Belongs to the universal ribosomal protein uS15 family. As to quaternary structure, part of the 30S ribosomal subunit. Forms a bridge to the 50S subunit in the 70S ribosome, contacting the 23S rRNA.

Its function is as follows. One of the primary rRNA binding proteins, it binds directly to 16S rRNA where it helps nucleate assembly of the platform of the 30S subunit by binding and bridging several RNA helices of the 16S rRNA. Functionally, forms an intersubunit bridge (bridge B4) with the 23S rRNA of the 50S subunit in the ribosome. This chain is Small ribosomal subunit protein uS15, found in Caldicellulosiruptor saccharolyticus (strain ATCC 43494 / DSM 8903 / Tp8T 6331).